The following is a 278-amino-acid chain: MDIKAYFELIRLKNCLTASFGAFIGGLIASYFNISMIDNLILASIVVFLVCGFGNALNDIYDLKIDKINKPKRPIPSKRISLGEARIFSYLLVVMGLIISMFNITCFLMAVLNSIVLQQYASTYKKNKIVGNLIVAYLTGSVFIFGGIAVGNIDVTIMLFLCALFAMWSREIIKDYEDIEGDIKEKVISIPIKCGEKSIYIAAFLLVFAVLLSPLPYLFGFFGIYYLISVIFCDLLFLIGIYNLVMNPSKKEAKKASRNIKIVTNLVLIAFLIGSLFK.

Helical transmembrane passes span 12–32, 34–54, 91–111, 142–162, 204–224, 226–246, and 257–277; these read LKNCLTASFGAFIGGLIASYF, ISMIDNLILASIVVFLVCGFG, LLVVMGLIISMFNITCFLMAV, VFIFGGIAVGNIDVTIMLFLC, FLLVFAVLLSPLPYLFGFFGI, YLISVIFCDLLFLIGIYNLVM, and SRNIKIVTNLVLIAFLIGSLF.

This sequence belongs to the UbiA prenyltransferase family. DGGGP synthase subfamily. The cofactor is Mg(2+).

It localises to the cell membrane. It carries out the reaction sn-3-O-(geranylgeranyl)glycerol 1-phosphate + (2E,6E,10E)-geranylgeranyl diphosphate = 2,3-bis-O-(geranylgeranyl)-sn-glycerol 1-phosphate + diphosphate. The protein operates within membrane lipid metabolism; glycerophospholipid metabolism. In terms of biological role, prenyltransferase that catalyzes the transfer of the geranylgeranyl moiety of geranylgeranyl diphosphate (GGPP) to the C2 hydroxyl of (S)-3-O-geranylgeranylglyceryl phosphate (GGGP). This reaction is the second ether-bond-formation step in the biosynthesis of archaeal membrane lipids. The sequence is that of Digeranylgeranylglyceryl phosphate synthase from Methanococcus maripaludis (strain C6 / ATCC BAA-1332).